The primary structure comprises 302 residues: Phosphoribosylaminoimidazole-succinocarboxamide synthase (302 aa).

This sequence belongs to the SAICAR synthetase family.

The enzyme catalyses 5-amino-1-(5-phospho-D-ribosyl)imidazole-4-carboxylate + L-aspartate + ATP = (2S)-2-[5-amino-1-(5-phospho-beta-D-ribosyl)imidazole-4-carboxamido]succinate + ADP + phosphate + 2 H(+). The protein operates within purine metabolism; IMP biosynthesis via de novo pathway; 5-amino-1-(5-phospho-D-ribosyl)imidazole-4-carboxamide from 5-amino-1-(5-phospho-D-ribosyl)imidazole-4-carboxylate: step 1/2. The sequence is that of Phosphoribosylaminoimidazole-succinocarboxamide synthase from Cupriavidus necator (strain ATCC 17699 / DSM 428 / KCTC 22496 / NCIMB 10442 / H16 / Stanier 337) (Ralstonia eutropha).